A 1423-amino-acid chain; its full sequence is Autophagy-related protein 11 (1423 aa).

2 coiled-coil regions span residues 551–589 and 625–978; these read DDEL…QSQA and SEGT…ASEL. Disordered regions lie at residues 583 to 660 and 1028 to 1048; these read LHRQ…SNRA and RAER…SLRK. A compositionally biased stretch (polar residues) spans 585 to 602; it reads RQSQASRPGNLFQPQTNS. A compositionally biased stretch (basic and acidic residues) spans 631-648; the sequence is LLRRISELENELREEKQR. 2 stretches are compositionally biased toward polar residues: residues 650 to 660 and 1034 to 1047; these read SRIQNDLSNRA and QNPN…TSLR. The stretch at 1102–1130 forms a coiled coil; sequence HRIKEVEHKARKWQKEARSYRDRAHIAQK. Positions 1327–1423 are disordered; that stretch reads SLRAAAPETP…DYTYESPGKK (97 aa). A compositionally biased stretch (basic and acidic residues) spans 1383–1395; sequence KTAEPRRMLDRQE.

The protein belongs to the ATG11 family. Homodimer and potential homooligomers. Interacts with ATG1 kinase and the ATG19 and ATG34 cargo protein transporters. Interacts with ATG9, ATG17 and ATG20.

It localises to the preautophagosomal structure membrane. The protein localises to the vacuole membrane. Its function is as follows. Involved in cytoplasm to vacuole transport (Cvt), pexophagy, mitophagy and nucleophagy. Recruits mitochondria for their selective degradation via autophagy (mitophagy) during starvation, through its interaction with ATG32. Works as scaffold proteins that recruit ATG proteins to the pre-autophagosome (PAS), the site of vesicle/autophagosome formation. Required for ATG9 anterograde transport from the mitochondria to the PAS. Also recruits the ATG19-prAPE1 complex to the PAS. Required for the Cvt vesicles completion. Plays a role in morphological differentiation and cephalosporin production. This Hapsidospora chrysogena (Acremonium chrysogenum) protein is Autophagy-related protein 11.